Here is a 433-residue protein sequence, read N- to C-terminus: Probable non-inhibitory serpin-Z5 (433 aa).

Residues 1–12 are compositionally biased toward basic and acidic residues; that stretch reads MEPKEKKQKLDT. The tract at residues 1–43 is disordered; that stretch reads MEPKEKKQKLDTSEVASPSLSKTHLKKKKTKKQKIRKSQEITS. Residues 23–36 are compositionally biased toward basic residues; that stretch reads THLKKKKTKKQKIR. The segment at 380–404 is RCL; it reads GTEAVTFTAFRSAYLGCALVKPIDF.

The protein belongs to the serpin family. In terms of tissue distribution, weakly expressed during seedling development.

This Arabidopsis thaliana (Mouse-ear cress) protein is Probable non-inhibitory serpin-Z5.